Reading from the N-terminus, the 312-residue chain is MPIRIPDQLPAAEVLREENIFVMQESRATTQAIRPLKVIILNLMPKKIETETQFLRLLSNSPLQVDVELLRIDNRTSKNTPTEHLDTFYRQFEGIKNRNFDGLIITGAPLGLVQFEDVIYWEHLQTIMTWAKDHVTSSLYVCWAAQAGLKLLYDLPKRTRKEKLSGVYKHTNLEQHHPILRGFDDQFLAPHSHYADFSADYLNAHTDLDILATSKEAGVYLASTKDKRNVFVTGHPEYDSLTLHNEYLRDLGEGMEPIIPVNYYPDDNPDIPPKATWRSHGHLLFSNWLNYCVYQQTPYDLDHFSELNFTRD.

Catalysis depends on cysteine 142, which acts as the Acyl-thioester intermediate. Substrate is bound by residues lysine 163 and serine 192. The Proton acceptor role is filled by histidine 235. Residue glutamate 237 is part of the active site. Arginine 249 contributes to the substrate binding site.

It belongs to the MetA family.

The protein localises to the cytoplasm. It carries out the reaction L-homoserine + succinyl-CoA = O-succinyl-L-homoserine + CoA. It functions in the pathway amino-acid biosynthesis; L-methionine biosynthesis via de novo pathway; O-succinyl-L-homoserine from L-homoserine: step 1/1. Its function is as follows. Transfers a succinyl group from succinyl-CoA to L-homoserine, forming succinyl-L-homoserine. The protein is Homoserine O-succinyltransferase of Aliivibrio salmonicida (strain LFI1238) (Vibrio salmonicida (strain LFI1238)).